Reading from the N-terminus, the 185-residue chain is MARLYVGNLDPRVTSGELEDEFRVFGVLRSVWVARKPPGFAFIDFDDKRDAEDALRDLDGKNGWRVELSRNSSSRGGRDRHGGSEMKCYECGETGHFARECRLRIGPGGLGSGKRRSRSRSRSRSPQYRKSPTYGRRSYSPRDRSPRRRSVSPVRGRSYSRSPRGRGGSPYADGRDGGRYRRSRS.

In terms of domain architecture, RRM spans 2 to 73; that stretch reads ARLYVGNLDP…WRVELSRNSS (72 aa). A CCHC-type zinc finger spans residues 86 to 103; that stretch reads MKCYECGETGHFARECRL. The interval 104-185 is disordered; it reads RIGPGGLGSG…DGGRYRRSRS (82 aa). Basic residues predominate over residues 113 to 123; sequence GKRRSRSRSRS. Composition is skewed to low complexity over residues 124 to 138 and 151 to 162; these read RSPQ…GRRS and VSPVRGRSYSRS.

This sequence belongs to the splicing factor SR family. Extensively phosphorylated on serine residues in the RS domain. In terms of tissue distribution, expressed in roots, leaves and immature seeds.

The protein resides in the nucleus. Functionally, involved in pre-mRNA splicing. The protein is Serine/arginine-rich splicing factor RSZ21 (RSZP21) of Oryza sativa subsp. japonica (Rice).